Reading from the N-terminus, the 367-residue chain is Eukaryotic translation initiation factor 3 subunit H (367 aa).

The region spanning 14–166 is the MPN domain; that stretch reads VQVEALVVMK…LRAFRLSPNF (153 aa).

It belongs to the eIF-3 subunit H family. In terms of assembly, component of the eukaryotic translation initiation factor 3 (eIF-3) complex.

It is found in the cytoplasm. In terms of biological role, component of the eukaryotic translation initiation factor 3 (eIF-3) complex, which is involved in protein synthesis of a specialized repertoire of mRNAs and, together with other initiation factors, stimulates binding of mRNA and methionyl-tRNAi to the 40S ribosome. The eIF-3 complex specifically targets and initiates translation of a subset of mRNAs involved in cell proliferation. The chain is Eukaryotic translation initiation factor 3 subunit H from Sclerotinia sclerotiorum (strain ATCC 18683 / 1980 / Ss-1) (White mold).